Here is a 213-residue protein sequence, read N- to C-terminus: Ribosomal RNA small subunit methyltransferase G (213 aa).

S-adenosyl-L-methionine is bound by residues glycine 81, leucine 86, 132-133 (VE), and arginine 147.

The protein belongs to the methyltransferase superfamily. RNA methyltransferase RsmG family.

The protein localises to the cytoplasm. It carries out the reaction guanosine(527) in 16S rRNA + S-adenosyl-L-methionine = N(7)-methylguanosine(527) in 16S rRNA + S-adenosyl-L-homocysteine. Its function is as follows. Specifically methylates the N7 position of guanine in position 527 of 16S rRNA. The protein is Ribosomal RNA small subunit methyltransferase G of Mannheimia succiniciproducens (strain KCTC 0769BP / MBEL55E).